Here is a 163-residue protein sequence, read N- to C-terminus: Cyanate hydratase (163 aa).

Active-site residues include Arg103, Glu106, and Ser129.

The protein belongs to the cyanase family.

It catalyses the reaction cyanate + hydrogencarbonate + 3 H(+) = NH4(+) + 2 CO2. Catalyzes the reaction of cyanate with bicarbonate to produce ammonia and carbon dioxide. The polypeptide is Cyanate hydratase (Ajellomyces capsulatus (strain H143) (Darling's disease fungus)).